The sequence spans 296 residues: Nucleotide-binding protein SZO_12220 (296 aa).

13–20 contributes to the ATP binding site; that stretch reads GMSGAGKT. 63–66 contacts GTP; sequence DMRS.

The protein belongs to the RapZ-like family.

Its function is as follows. Displays ATPase and GTPase activities. In Streptococcus equi subsp. zooepidemicus (strain H70), this protein is Nucleotide-binding protein SZO_12220.